A 315-amino-acid polypeptide reads, in one-letter code: tRNA pseudouridine synthase B (315 aa).

The active-site Nucleophile is Asp47.

The protein belongs to the pseudouridine synthase TruB family. Type 1 subfamily.

It catalyses the reaction uridine(55) in tRNA = pseudouridine(55) in tRNA. In terms of biological role, responsible for synthesis of pseudouridine from uracil-55 in the psi GC loop of transfer RNAs. This is tRNA pseudouridine synthase B from Shewanella amazonensis (strain ATCC BAA-1098 / SB2B).